A 494-amino-acid polypeptide reads, in one-letter code: Splicing regulatory glutamine/lysine-rich protein 1 (494 aa).

One can recognise an RRM domain in the interval 69-145 (RTVYVGNLNS…RPLKINHSNN (77 aa)). 2 positions are modified to phosphoserine: serine 174 and serine 187. The disordered stretch occupies residues 176 to 494 (ISAAIEPESG…ESPCSKADAV (319 aa)). The segment covering 183–192 (ESGKSNERKG) has biased composition (basic and acidic residues). Positions 193–262 (GRSRSHTRSK…KSRSRSRSRD (70 aa)) are enriched in basic residues. Positions 263-340 (KRKDTREKVK…DRSKETDEKR (78 aa)) are enriched in basic and acidic residues. Threonine 348 bears the Phosphothreonine mark. Over residues 357–373 (RRSRSTSRERRRRRSRS) the composition is skewed to basic residues. Residues 404–474 (REKERDHISD…SPRTEDEGKV (71 aa)) are compositionally biased toward basic and acidic residues. Over residues 476-486 (HNGNCQPNEES) the composition is skewed to polar residues. Lysine 490 participates in a covalent cross-link: Glycyl lysine isopeptide (Lys-Gly) (interchain with G-Cter in SUMO2).

This sequence belongs to the splicing factor SR family. Homodimer. Binds SFRS1, SFRS2, SFRS3 and SFRS6. Interacts with the spliceosome. Interacts with SREK1IP1.

It is found in the nucleus. In terms of biological role, participates in the regulation of alternative splicing by modulating the activity of other splice facors. Inhibits the splicing activity of SFRS1, SFRS2 and SFRS6. Augments the splicing activity of SFRS3. This is Splicing regulatory glutamine/lysine-rich protein 1 (Srek1) from Mus musculus (Mouse).